The primary structure comprises 463 residues: MESGFNGSRPHRVKKDLPDRVNPVNTQGSSGTTGNAFRKNNNNKTQNWKPRSGPGNRNEGDQTKNNKSDLQQPSEVHPENQVRPESSTGESVKQQSEPHRVLEDKKQSGKTAGSSVRIPEEGGGGLGSANYLGKRQLDFVAKLCVESGFKSTGKPLKRYPAEFFKSSGLLEKFVKYLSSRLDKGCNLSQRESEVVLKNLRSKRAEQSFLAGAVTGVPGSGKTTLLRKVQCEGGFNSIVILGNPRSKTEFSNLPSCYTAKEILLLGIAIKCEVLLIDEYTLLTSGEILLLQKITNSRIVILFGDRAQGSSNTLCSPEWLQVPVIFQSLTSRRFGKATANLCRRQGFDFEGGEHEDKVVESPYEGSSPATDINIVFSESTREDLLECGIESTLVSDVQGKEYNTVTLFIPDEDREYLTNAHLRSVAFSRHKFALEIRCNPELFMQLINGELASKQQPQTDRYGPE.

Positions 1–126 (MESGFNGSRP…RIPEEGGGGL (126 aa)) are disordered. Nucleolar localization signal regions lie at residues 11-16 (HRVKKD) and 37-52 (FRKN…KPRS). Over residues 23-49 (PVNTQGSSGTTGNAFRKNNNNKTQNWK) the composition is skewed to polar residues. A compositionally biased stretch (basic and acidic residues) spans 58–67 (NEGDQTKNNK). Positions 83–95 (RPESSTGESVKQQ) are enriched in polar residues. Residues 96–107 (SEPHRVLEDKKQ) show a composition bias toward basic and acidic residues. The region spanning 185 to 326 (CNLSQRESEV…WLQVPVIFQS (142 aa)) is the (+)RNA virus helicase ATP-binding domain. 215-222 (GVPGSGKT) is an ATP binding site. In terms of domain architecture, (+)RNA virus helicase C-terminal spans 327-463 (LTSRRFGKAT…QPQTDRYGPE (137 aa)).

The protein belongs to the virgaviridae/benyvirus TGB1 movement protein family. As to quaternary structure, homooligomer. TGB1-TGB3-TGB2 complex formation is enhanced by ATP hydrolysis. Interacts with the suppressor of RNA silencing (via N-terminus). Interacts (via N-terminus) with host importin IMPA1. Mg(2+) serves as cofactor.

It is found in the host cell junction. The protein localises to the host plasmodesma. Its subcellular location is the host nucleus. The protein resides in the host cytoplasm. It localises to the host nucleolus. It is found in the host cytoskeleton. It carries out the reaction ATP + H2O = ADP + phosphate + H(+). In terms of biological role, participates in the transport of viral genome to neighboring plant cells directly through plasmodesmata, without any budding. Multifunctional movement protein with RNA-binding, ATPase and helicase activities. Engages in homologous interactions leading to the formation of a ribonucleoprotein complex containing plus-sense viral RNAs (vRNPs). ATPase activity is probably required for vRNPs movement complex assembly. Intracellular delivery of TGBp1-containing vRNPs to plasmodesmata is facilitated by TGBp2 and TGBp3. The protein is Movement protein TGB1 of Potato mop-top virus (isolate Potato/Sweden/Sw) (PMTV).